The sequence spans 301 residues: m7GpppX diphosphatase (301 aa).

Residues Glu-154, Lys-176, and His-237–His-248 contribute to the substrate site. Positions His-244–His-248 match the Histidine triad motif motif. The active-site Nucleophile is His-246.

Belongs to the HIT family.

Its subcellular location is the nucleus. It catalyses the reaction a 5'-end (N(7)-methyl 5'-triphosphoguanosine)-ribonucleoside in mRNA + H2O = N(7)-methyl-GMP + a 5'-end diphospho-ribonucleoside in mRNA + 2 H(+). The enzyme catalyses a 5'-end (N(2),N(2),N(7)-trimethyl 5'-triphosphoguanosine)-ribonucleoside in mRNA + H2O = (N(2),N(2),N(7))-trimethyl-GMP + a 5'-end diphospho-ribonucleoside in mRNA + 2 H(+). Its activity is regulated as follows. The hydrolytic product 7-methylguanosine diphosphate (m7GDP) efficiently inhibits the decapping scavenger activity and acts as a competitive inhibitor in vitro. In terms of biological role, decapping scavenger enzyme that catalyzes the cleavage of a residual cap structure following the degradation of mRNAs of the 3'-&gt;5' exosome-mediated mRNA decay pathway. Hydrolyzes cap analog structures like 7-methylguanosine nucleoside triphosphate (m7GpppG) and tri-methyl guanosine nucleoside triphosphate (m3(2,2,7)GpppG) with up to 2 nucleotide substrates (small capped oligoribonucleotides) and specifically releases 5'-phosphorylated RNA fragments and 7-methylguanosine monophosphate (m7GMP). Does not hydrolyze unmethylated cap analog (GpppG) and shows no decapping activity on intact m7GpppG-capped mRNA molecules. Does not hydrolyze 7-methylguanosine diphosphate (m7GDP) and tri-methylguanosine diphosphate (m3(2,2,7)GDP) to m(7)GMP and m3(2,2,7)GMP, respectively. May also play a role in the 5'-&gt;3 mRNA decay pathway; m7GDP, the downstream product released by the 5'-&gt;3' mRNA mediated decapping activity, may be also converted by dcs-1 to m7GMP. Binds to m7GpppG and strongly to m7GDP. This Ascaris suum (Pig roundworm) protein is m7GpppX diphosphatase.